We begin with the raw amino-acid sequence, 292 residues long: Large ribosomal subunit protein bL19m (292 aa).

The segment at 39 to 68 is disordered; the sequence is GPGRRQITGPSEPGVFQPPPKPVIVDKRGP. Ser-77 bears the Phosphoserine mark.

This sequence belongs to the bacterial ribosomal protein bL19 family. Component of the mitochondrial ribosome large subunit (39S) which comprises a 16S rRNA and about 50 distinct proteins.

Its subcellular location is the mitochondrion. The protein is Large ribosomal subunit protein bL19m (MRPL19) of Bos taurus (Bovine).